The following is a 485-amino-acid chain: tRNA sulfurtransferase (485 aa).

In terms of domain architecture, THUMP spans 61–165 (EELIALLQRI…DDKMMLVKAR (105 aa)). Residues 183-184 (LI), lysine 265, glycine 287, and glutamine 296 contribute to the ATP site. Cysteine 344 and cysteine 456 are disulfide-bonded. The Rhodanese domain occupies 404–483 (LSENEVILDI…FSNVRVFAKK (80 aa)). Cysteine 456 functions as the Cysteine persulfide intermediate in the catalytic mechanism.

The protein belongs to the ThiI family.

Its subcellular location is the cytoplasm. The enzyme catalyses [ThiI sulfur-carrier protein]-S-sulfanyl-L-cysteine + a uridine in tRNA + 2 reduced [2Fe-2S]-[ferredoxin] + ATP + H(+) = [ThiI sulfur-carrier protein]-L-cysteine + a 4-thiouridine in tRNA + 2 oxidized [2Fe-2S]-[ferredoxin] + AMP + diphosphate. It catalyses the reaction [ThiS sulfur-carrier protein]-C-terminal Gly-Gly-AMP + S-sulfanyl-L-cysteinyl-[cysteine desulfurase] + AH2 = [ThiS sulfur-carrier protein]-C-terminal-Gly-aminoethanethioate + L-cysteinyl-[cysteine desulfurase] + A + AMP + 2 H(+). It functions in the pathway cofactor biosynthesis; thiamine diphosphate biosynthesis. Functionally, catalyzes the ATP-dependent transfer of a sulfur to tRNA to produce 4-thiouridine in position 8 of tRNAs, which functions as a near-UV photosensor. Also catalyzes the transfer of sulfur to the sulfur carrier protein ThiS, forming ThiS-thiocarboxylate. This is a step in the synthesis of thiazole, in the thiamine biosynthesis pathway. The sulfur is donated as persulfide by IscS. The chain is tRNA sulfurtransferase from Haemophilus influenzae (strain PittEE).